The following is a 370-amino-acid chain: Coiled-coil domain-containing protein 89 (370 aa).

The disordered stretch occupies residues 1-21 (MPQEEKTLRMDTPPPDEILGK). Phosphothreonine is present on Thr12. Positions 36–346 (KEMDGLREAL…YDELRLQSEA (311 aa)) form a coiled coil.

This sequence belongs to the CCDC89 family. Interacts with HEY1. Expression is restricted to the adult testis, where localization is almost exclusive to round spermatids.

The protein localises to the cytoplasm. It localises to the nucleus. The protein is Coiled-coil domain-containing protein 89 of Mus musculus (Mouse).